A 647-amino-acid polypeptide reads, in one-letter code: ATP-binding protein Uup (647 aa).

ABC transporter domains are found at residues 1–253 and 320–546; these read MALI…RVEA and FEME…AKAK. Residues 36 to 43 and 352 to 359 contribute to the ATP site; these read GRNGAGKS and GPNGCGKT. Residues 545–563 are compositionally biased toward basic and acidic residues; it reads AKKSEPLKEESAVKNDRTS. A disordered region spans residues 545–569; that stretch reads AKKSEPLKEESAVKNDRTSKPKSVK. The segment at 559 to 647 is C-terminal domain (CTD), binds DNA; that stretch reads NDRTSKPKSV…EKKNLVEGKA (89 aa).

This sequence belongs to the ABC transporter superfamily. ABCF family. Uup subfamily.

The protein resides in the cytoplasm. The catalysed reaction is ATP + H2O = ADP + phosphate + H(+). Its function is as follows. Probably plays a role in ribosome assembly or function. May be involved in resolution of branched DNA intermediates that result from template switching in postreplication gaps. Binds DNA and has ATPase activity. In Haemophilus influenzae (strain ATCC 51907 / DSM 11121 / KW20 / Rd), this protein is ATP-binding protein Uup.